Reading from the N-terminus, the 156-residue chain is Small ribosomal subunit protein uS7 (156 aa).

The protein belongs to the universal ribosomal protein uS7 family. In terms of assembly, part of the 30S ribosomal subunit. Contacts proteins S9 and S11.

Functionally, one of the primary rRNA binding proteins, it binds directly to 16S rRNA where it nucleates assembly of the head domain of the 30S subunit. Is located at the subunit interface close to the decoding center, probably blocks exit of the E-site tRNA. This chain is Small ribosomal subunit protein uS7, found in Dehalococcoides mccartyi (strain ATCC BAA-2266 / KCTC 15142 / 195) (Dehalococcoides ethenogenes (strain 195)).